Consider the following 466-residue polypeptide: Tubulointerstitial nephritis antigen-like (466 aa).

Positions 1–21 (MWGCWLGLLLLLLAGQAALEA) are cleaved as a signal peptide. The region spanning 49 to 96 (EQDMCCRGRADECALPYLGATCYCDLFCNRTVSDCCPDFWDFCLGIPP) is the SMB domain. 5 disulfides stabilise this stretch: cysteine 53–cysteine 72, cysteine 70–cysteine 72, cysteine 70–cysteine 84, cysteine 76–cysteine 83, and cysteine 84–cysteine 91. A glycan (N-linked (GlcNAc...) asparagine) is linked at asparagine 77. A glycan (N-linked (GlcNAc...) asparagine) is linked at asparagine 160.

It belongs to the peptidase C1 family. Glycosylated. In terms of tissue distribution, highly expressed in kidney, heart and adrenocortical cells of adrenal glands. Moderately expressed in spleen and liver. Also found in prostate, seminal vesicle, epididymis and testis in male reproductive organs. In adrenal glands is found in the outer cortical regions corresponding to the zona glomerulosa (zG) and the undifferentiated cell zone (zU) (at protein level).

Its subcellular location is the secreted. Its function is as follows. May be implicated in the adrenocortical zonation and in mechanisms for repressing the CYP11B1 gene expression in adrenocortical cells. This is a non catalytic peptidase C1 family protein. The chain is Tubulointerstitial nephritis antigen-like (Tinagl1) from Mus musculus (Mouse).